We begin with the raw amino-acid sequence, 391 residues long: MSVKKMADLDLTGKRLFIRADLNVPVKEGKITSDARIRATIPTLKLALQKGAKVMVTSHLGRPTEGVFEEANSLQPVVDYLNASDLGVPVRLVRDYLDGVEVNQNEIVVLENVRINKGEKKNDAELAKKYAALCDIFVMDAFGTAHRAECSTYGIAEFAPIACAGPLLAAELEALGKALKEPQRPMLAIVGGSKVSTKLTVLDSLSKIADQLIVGGGIANIFIAAEGHNVGKSLYEADLIPEAKRLASTTHIPVPVDVRVGTEFSETATATEKLVSEVTADESIFDIGDKSAEELAHIIKSAKTIFWNGPVGVFEFANFRKGTEIISNAIAEATANGAFSIAGGGDTLAAIDLFGIADKISYISTGGGAFLEFVEGKVLPAVEILEKRANS.

Substrate is bound by residues 21–23 (DLN), Arg-36, 59–62 (HLGR), Arg-114, and Arg-147. Residues Lys-198, Glu-315, and 344-347 (GGDT) contribute to the ATP site.

It belongs to the phosphoglycerate kinase family. Monomer.

It is found in the cytoplasm. It carries out the reaction (2R)-3-phosphoglycerate + ATP = (2R)-3-phospho-glyceroyl phosphate + ADP. It functions in the pathway carbohydrate degradation; glycolysis; pyruvate from D-glyceraldehyde 3-phosphate: step 2/5. The chain is Phosphoglycerate kinase from Haemophilus ducreyi (strain 35000HP / ATCC 700724).